We begin with the raw amino-acid sequence, 236 residues long: Lipoarabinomannan carrier protein LprG (236 aa).

A signal peptide spans 1-26; sequence MRTPRRHCRRIAVLAAVSIAATVVAG. Cys-27 carries the N-palmitoyl cysteine lipid modification. Cys-27 carries S-diacylglycerol cysteine lipidation.

Belongs to the LppX/LprAFG lipoprotein family. Post-translationally, modified by Lgt on Cys-27 with an S-linked diacylglyceral, signal peptide is removed by LspA, Cys-27 is further modifed with a fatty acid on its amino group by Lnt yielding a triacylated protein.

It localises to the cell inner membrane. Its subcellular location is the secreted. The protein resides in the cell wall. Functionally, helps membrane protein Mb1445c (P55) transport triacylglycerides (TAG) across the inner cell membrane into the periplasm and probably ultimately to the outer membrane. Binds TAG in its hydrophobic cavity and transfers it between lipid bilayers. TAG probably regulates lipid metabolism and growth regulation and plays a structural role in the outer membrane. Binds di- and triacylated phosphatidyl-myo-inositol mannosides (PIMs), and glycolipid lipoglycan modulins lipoarabinomannan (LAM) and lipomannan (LM), facilitating their recognition by TLR2. Required for activity of drug efflux transporter Mb1445c. Required, probably with Mb1445c, for normal surface localization of LAM. In terms of biological role, constitutes a host TLR2 agonist (toll-like receptor). This is Lipoarabinomannan carrier protein LprG from Mycobacterium bovis (strain ATCC BAA-935 / AF2122/97).